Consider the following 215-residue polypeptide: 7-methyl-GTP pyrophosphatase (215 aa).

The active-site Proton acceptor is the Asp79.

The protein belongs to the Maf family. YceF subfamily. It depends on a divalent metal cation as a cofactor.

The protein resides in the cytoplasm. It carries out the reaction N(7)-methyl-GTP + H2O = N(7)-methyl-GMP + diphosphate + H(+). Functionally, nucleoside triphosphate pyrophosphatase that hydrolyzes 7-methyl-GTP (m(7)GTP). May have a dual role in cell division arrest and in preventing the incorporation of modified nucleotides into cellular nucleic acids. This is 7-methyl-GTP pyrophosphatase from Burkholderia thailandensis (strain ATCC 700388 / DSM 13276 / CCUG 48851 / CIP 106301 / E264).